A 336-amino-acid polypeptide reads, in one-letter code: Phosphate acyltransferase (336 aa).

Belongs to the PlsX family. In terms of assembly, homodimer. Probably interacts with PlsY.

The protein localises to the cytoplasm. It carries out the reaction a fatty acyl-[ACP] + phosphate = an acyl phosphate + holo-[ACP]. It functions in the pathway lipid metabolism; phospholipid metabolism. Catalyzes the reversible formation of acyl-phosphate (acyl-PO(4)) from acyl-[acyl-carrier-protein] (acyl-ACP). This enzyme utilizes acyl-ACP as fatty acyl donor, but not acyl-CoA. This chain is Phosphate acyltransferase, found in Pseudomonas aeruginosa (strain UCBPP-PA14).